Consider the following 451-residue polypeptide: Phosphoglucosamine mutase (451 aa).

Ser-104 acts as the Phosphoserine intermediate in catalysis. Positions 104, 242, 244, and 246 each coordinate Mg(2+). Position 104 is a phosphoserine (Ser-104).

This sequence belongs to the phosphohexose mutase family. Mg(2+) serves as cofactor. In terms of processing, activated by phosphorylation.

The catalysed reaction is alpha-D-glucosamine 1-phosphate = D-glucosamine 6-phosphate. Functionally, catalyzes the conversion of glucosamine-6-phosphate to glucosamine-1-phosphate. This chain is Phosphoglucosamine mutase, found in Kocuria rhizophila (strain ATCC 9341 / DSM 348 / NBRC 103217 / DC2201).